We begin with the raw amino-acid sequence, 183 residues long: Microfibrillar-associated protein 2 (183 aa).

A signal peptide spans 1–17 (MRAASLFLLFLPAGLLA). Glutamine 18 is subject to Pyrrolidone carboxylic acid. An Isoglutamyl lysine isopeptide (Gln-Lys) (interchain with K-?) cross-link involves residue glutamine 20. A sulfotyrosine mark is found at tyrosine 47, tyrosine 48, and tyrosine 50. Residues 153–183 (CRDKFSKCGVLASSGLCQSVAAACARSCGGC) enclose the ShKT domain. Disulfide bonds link cysteine 153–cysteine 183, cysteine 160–cysteine 176, and cysteine 169–cysteine 180.

It belongs to the MFAP family. In terms of assembly, forms a ternary complex with BGN and ELN. Interacts with FBN1 (via N-terminal domain) and FBN2. In terms of processing, O-glycosylated; glycans consist of Gal(beta1-3)GalNAc. Forms intermolecular disulfide bonds either with other MAGP-1 molecules or with other components of the microfibrils. Post-translationally, forms transglutaminase cross-links with tropoelastin.

It localises to the secreted. The protein resides in the extracellular space. Its subcellular location is the extracellular matrix. Functionally, component of the elastin-associated microfibrils. In Bos taurus (Bovine), this protein is Microfibrillar-associated protein 2 (MFAP2).